Here is a 130-residue protein sequence, read N- to C-terminus: Large ribosomal subunit protein bL17 (130 aa).

This sequence belongs to the bacterial ribosomal protein bL17 family. As to quaternary structure, part of the 50S ribosomal subunit. Contacts protein L32.

The polypeptide is Large ribosomal subunit protein bL17 (Paraburkholderia xenovorans (strain LB400)).